Consider the following 300-residue polypeptide: FeMo cofactor biosynthesis protein NifB (300 aa).

Residues 24–266 form the Radical SAM core domain; it reads HDKVGRVHLP…PQFRACGQCR (243 aa). 3 residues coordinate [4Fe-4S] cluster: Cys38, Cys42, and Cys45. Residues Gly93, Thr144, and Ile196 each coordinate S-adenosyl-L-methionine. Residues Cys262 and Cys265 each contribute to the [4Fe-4S] cluster site.

The protein belongs to the radical SAM superfamily. NifB family. As to quaternary structure, monomer. [4Fe-4S] cluster is required as a cofactor.

It participates in cofactor biosynthesis; Fe-Mo cofactor biosynthesis. Involved in the biosynthesis of the iron-molybdenum cofactor (FeMo-co or M-cluster) found in the dinitrogenase enzyme of the nitrogenase complex in nitrogen-fixing microorganisms. NifB catalyzes the crucial step of radical SAM-dependent carbide insertion that occurs concomitant with the insertion of a 9th sulfur and the rearrangement/coupling of two [4Fe-4S] clusters into a [8Fe-9S-C] cluster, the precursor to the M-cluster. This chain is FeMo cofactor biosynthesis protein NifB, found in Methanocaldococcus jannaschii (strain ATCC 43067 / DSM 2661 / JAL-1 / JCM 10045 / NBRC 100440) (Methanococcus jannaschii).